We begin with the raw amino-acid sequence, 124 residues long: Large ribosomal subunit protein bL12 (124 aa).

The protein belongs to the bacterial ribosomal protein bL12 family. In terms of assembly, homodimer. Part of the ribosomal stalk of the 50S ribosomal subunit. Forms a multimeric L10(L12)X complex, where L10 forms an elongated spine to which 2 to 4 L12 dimers bind in a sequential fashion. Binds GTP-bound translation factors.

Functionally, forms part of the ribosomal stalk which helps the ribosome interact with GTP-bound translation factors. Is thus essential for accurate translation. The protein is Large ribosomal subunit protein bL12 of Nautilia profundicola (strain ATCC BAA-1463 / DSM 18972 / AmH).